Consider the following 169-residue polypeptide: NAD(P)H-quinone oxidoreductase subunit J, chloroplastic (169 aa).

This sequence belongs to the complex I 30 kDa subunit family. As to quaternary structure, NDH is composed of at least 16 different subunits, 5 of which are encoded in the nucleus.

The protein localises to the plastid. It localises to the chloroplast thylakoid membrane. The enzyme catalyses a plastoquinone + NADH + (n+1) H(+)(in) = a plastoquinol + NAD(+) + n H(+)(out). It carries out the reaction a plastoquinone + NADPH + (n+1) H(+)(in) = a plastoquinol + NADP(+) + n H(+)(out). Its function is as follows. NDH shuttles electrons from NAD(P)H:plastoquinone, via FMN and iron-sulfur (Fe-S) centers, to quinones in the photosynthetic chain and possibly in a chloroplast respiratory chain. The immediate electron acceptor for the enzyme in this species is believed to be plastoquinone. Couples the redox reaction to proton translocation, and thus conserves the redox energy in a proton gradient. In Zygnema circumcarinatum (Green alga), this protein is NAD(P)H-quinone oxidoreductase subunit J, chloroplastic.